The sequence spans 179 residues: Large ribosomal subunit protein uL5 (179 aa).

This sequence belongs to the universal ribosomal protein uL5 family. As to quaternary structure, part of the 50S ribosomal subunit; part of the 5S rRNA/L5/L18/L25 subcomplex. Contacts the 5S rRNA and the P site tRNA. Forms a bridge to the 30S subunit in the 70S ribosome.

Functionally, this is one of the proteins that bind and probably mediate the attachment of the 5S RNA into the large ribosomal subunit, where it forms part of the central protuberance. In the 70S ribosome it contacts protein S13 of the 30S subunit (bridge B1b), connecting the 2 subunits; this bridge is implicated in subunit movement. Contacts the P site tRNA; the 5S rRNA and some of its associated proteins might help stabilize positioning of ribosome-bound tRNAs. The sequence is that of Large ribosomal subunit protein uL5 from Geotalea uraniireducens (strain Rf4) (Geobacter uraniireducens).